The sequence spans 322 residues: 4-hydroxy-3-methylbut-2-enyl diphosphate reductase (322 aa).

Residue Cys-15 participates in [4Fe-4S] cluster binding. (2E)-4-hydroxy-3-methylbut-2-enyl diphosphate is bound by residues His-44 and His-77. Positions 44 and 77 each coordinate dimethylallyl diphosphate. The isopentenyl diphosphate site is built by His-44 and His-77. Cys-99 serves as a coordination point for [4Fe-4S] cluster. (2E)-4-hydroxy-3-methylbut-2-enyl diphosphate is bound at residue His-127. His-127 lines the dimethylallyl diphosphate pocket. An isopentenyl diphosphate-binding site is contributed by His-127. The active-site Proton donor is the Glu-129. Thr-168 contacts (2E)-4-hydroxy-3-methylbut-2-enyl diphosphate. Residue Cys-198 participates in [4Fe-4S] cluster binding. The (2E)-4-hydroxy-3-methylbut-2-enyl diphosphate site is built by Ser-226, Ser-227, Asn-228, and Ser-270. Dimethylallyl diphosphate is bound by residues Ser-226, Ser-227, Asn-228, and Ser-270. The isopentenyl diphosphate site is built by Ser-226, Ser-227, Asn-228, and Ser-270.

It belongs to the IspH family. [4Fe-4S] cluster is required as a cofactor.

It catalyses the reaction isopentenyl diphosphate + 2 oxidized [2Fe-2S]-[ferredoxin] + H2O = (2E)-4-hydroxy-3-methylbut-2-enyl diphosphate + 2 reduced [2Fe-2S]-[ferredoxin] + 2 H(+). It carries out the reaction dimethylallyl diphosphate + 2 oxidized [2Fe-2S]-[ferredoxin] + H2O = (2E)-4-hydroxy-3-methylbut-2-enyl diphosphate + 2 reduced [2Fe-2S]-[ferredoxin] + 2 H(+). The protein operates within isoprenoid biosynthesis; dimethylallyl diphosphate biosynthesis; dimethylallyl diphosphate from (2E)-4-hydroxy-3-methylbutenyl diphosphate: step 1/1. Its pathway is isoprenoid biosynthesis; isopentenyl diphosphate biosynthesis via DXP pathway; isopentenyl diphosphate from 1-deoxy-D-xylulose 5-phosphate: step 6/6. Catalyzes the conversion of 1-hydroxy-2-methyl-2-(E)-butenyl 4-diphosphate (HMBPP) into a mixture of isopentenyl diphosphate (IPP) and dimethylallyl diphosphate (DMAPP). Acts in the terminal step of the DOXP/MEP pathway for isoprenoid precursor biosynthesis. This Neisseria gonorrhoeae (strain ATCC 700825 / FA 1090) protein is 4-hydroxy-3-methylbut-2-enyl diphosphate reductase.